The following is a 517-amino-acid chain: MEVNEGQDTEGGSSRAQTLTPPPNPQQQLYDEEDLLRESMDTTEKTFENGFQIQKEQIRQHLQDSSQRGTAEDAETQKMKQFLDTNELHNMASDSWAMMREEIMEKRETNRDLNRQLKEKSEELMQKSQILVETTLKLKAVEEERDKRKKEEQFREADARSNNYARKDHGYKMHNIELKNEYTSTTYRCRYICRCALKPCMFNMTLVPEAHTPSPTQLYRMYCIMEKSGNRKIDPKQLMAMSSRPLPSPLQITLPDKMMDNLFKDMIGCSSLWTYVAELGWENSYNRYVDKLLNENCGDILNGPGTMLILADGLRLEDLPVSTKNCFVCTDYDEETLIALQKKCCRERFKMIVLVIPFTIDVELVDCWNRLIAKISEETKILVVSNMTPDELEDHALLVEFTSILQKCRRVDDGYLEIISLHDRLEAHPRKTLEMTALAGKVEYWKAVQTRAKEVGMEWKAFELKRCTSDTPVKNSDCEASTSMKSASTVRTFEDRMVKRGNHNRVYHHFTPYGRKK.

Disordered stretches follow at residues 1–29 (MEVN…QQQL) and 142–161 (EEER…DARS).

The sequence is that of Retrotransposon-like protein 1 (retr-1) from Caenorhabditis elegans.